An 805-amino-acid chain; its full sequence is Ribosome biogenesis protein ERB1 (805 aa).

Residues 1-105 are disordered; that stretch reads MVKGRKSQKA…SDFSEDDTKS (105 aa). Positions 8 to 22 are enriched in basic and acidic residues; it reads QKADKVTKAKKRVAD. Acidic residues predominate over residues 23–75; it reads EVDESESEPELQVEGLIDAEAESEDDESFESAEENASAEEDEEDEEDEEDSDA. A required for interaction with NOP7 region spans residues 264–382; sequence RFVPSKNEAK…LRKVPGYTES (119 aa). The required for interaction with YTM1 stretch occupies residues 382–418; it reads SVRERFERSLDLYLAPRMRKNKLNIDPESLIPELPSP. WD repeat units lie at residues 434–473, 482–522, 590–632, 635–673, 676–715, 719–758, and 775–805; these read GHEG…EVYR, NPED…YDIE, VCKK…TQSP, KSKG…LVKK, PGAR…TPYK, YHDK…DMMK, and GHLG…MWTT.

It belongs to the WD repeat BOP1/ERB1 family. In terms of assembly, component of the NOP7 complex, composed of ERB1, NOP7 and YTM1. The complex is held together by ERB1, which interacts with NOP7 via its N-terminal domain and with YTM1 via a high-affinity interaction between the seven-bladed beta-propeller domains of the 2 proteins. The NOP7 complex associates with the 66S pre-ribosome.

It localises to the nucleus. Its subcellular location is the nucleolus. The protein resides in the nucleoplasm. Its function is as follows. Component of the NOP7 complex, which is required for maturation of the 25S and 5.8S ribosomal RNAs and formation of the 60S ribosome. The polypeptide is Ribosome biogenesis protein ERB1 (Candida glabrata (strain ATCC 2001 / BCRC 20586 / JCM 3761 / NBRC 0622 / NRRL Y-65 / CBS 138) (Yeast)).